The sequence spans 128 residues: DELTA-urthionin-Uf1a (128 aa).

Residues 1 to 24 (MEGKTVIVSLLLLSIVVGQIQVEA) form the signal peptide. 3 disulfides stabilise this stretch: cysteine 27-cysteine 64, cysteine 28-cysteine 56, and cysteine 40-cysteine 50. Residues 67–128 (LSIPEVTGEA…LCTKNSIETA (62 aa)) constitute a propeptide, acidic domain.

This sequence belongs to the plant thionin (TC 1.C.44) family. As to expression, expressed in trichomes, that are stiff epidermal hairs located on the surface of petioles and leaves.

Its subcellular location is the secreted. Functionally, plant defense protein that causes pain by probable disruption of cell membranes. Shows cytotoxic activity against the neuroblastoma cell line SH-SY5Y and slightly weaker activity against several non-neuronal cell lines. In vivo, intraplantar injection into mice causes several nocifensive responses, along with swelling and redness. The sequence is that of DELTA-urthionin-Uf1a from Urtica ferox (Tree nettle).